We begin with the raw amino-acid sequence, 294 residues long: 4-hydroxy-tetrahydrodipicolinate synthase (294 aa).

Thr-44 is a binding site for pyruvate. Tyr-132 acts as the Proton donor/acceptor in catalysis. Catalysis depends on Lys-160, which acts as the Schiff-base intermediate with substrate. Pyruvate is bound at residue Ile-205.

It belongs to the DapA family. In terms of assembly, homotetramer; dimer of dimers.

The protein localises to the cytoplasm. The catalysed reaction is L-aspartate 4-semialdehyde + pyruvate = (2S,4S)-4-hydroxy-2,3,4,5-tetrahydrodipicolinate + H2O + H(+). It participates in amino-acid biosynthesis; L-lysine biosynthesis via DAP pathway; (S)-tetrahydrodipicolinate from L-aspartate: step 3/4. Catalyzes the condensation of (S)-aspartate-beta-semialdehyde [(S)-ASA] and pyruvate to 4-hydroxy-tetrahydrodipicolinate (HTPA). The protein is 4-hydroxy-tetrahydrodipicolinate synthase of Kosmotoga olearia (strain ATCC BAA-1733 / DSM 21960 / TBF 19.5.1).